A 96-amino-acid chain; its full sequence is Protein RSI-1 (96 aa).

The first 29 residues, 1–29 (MAKSGYNASFLLLISMFLILLTFSNVVEG), serve as a signal peptide directing secretion.

This sequence belongs to the GASA family. In terms of processing, six disulfide bonds may be present. In terms of tissue distribution, expressed very early in lateral root development.

The protein resides in the secreted. The polypeptide is Protein RSI-1 (RSI-1) (Solanum lycopersicum (Tomato)).